The sequence spans 118 residues: Large ribosomal subunit protein bL20 (118 aa).

Belongs to the bacterial ribosomal protein bL20 family.

In terms of biological role, binds directly to 23S ribosomal RNA and is necessary for the in vitro assembly process of the 50S ribosomal subunit. It is not involved in the protein synthesizing functions of that subunit. In Pseudomonas fluorescens (strain ATCC BAA-477 / NRRL B-23932 / Pf-5), this protein is Large ribosomal subunit protein bL20.